Consider the following 363-residue polypeptide: NAD(P)H-quinone oxidoreductase subunit 1, chloroplastic (363 aa).

The next 8 membrane-spanning stretches (helical) occupy residues 26 to 46, 96 to 116, 127 to 147, 175 to 195, 203 to 223, 253 to 273, 303 to 323, and 343 to 363; these read FVWICVPIVVLILGITLGVLV, WLFALGPAIVVIPVLLSFLVI, ISIGMFFWIAVSSVAPVGLLV, LALCVLSVVLMSNSLSTIEIV, ILGWNIWRQPVGFIAFVISAL, FGLFYVASYLNLFASSLFVTI, GLIAFAITLSKAYLFLFASIL, and FLLPVALGNLLLTASFELALL.

Belongs to the complex I subunit 1 family. In terms of assembly, NDH is composed of at least 16 different subunits, 5 of which are encoded in the nucleus.

It is found in the plastid. It localises to the chloroplast thylakoid membrane. It carries out the reaction a plastoquinone + NADH + (n+1) H(+)(in) = a plastoquinol + NAD(+) + n H(+)(out). It catalyses the reaction a plastoquinone + NADPH + (n+1) H(+)(in) = a plastoquinol + NADP(+) + n H(+)(out). Its function is as follows. NDH shuttles electrons from NAD(P)H:plastoquinone, via FMN and iron-sulfur (Fe-S) centers, to quinones in the photosynthetic chain and possibly in a chloroplast respiratory chain. The immediate electron acceptor for the enzyme in this species is believed to be plastoquinone. Couples the redox reaction to proton translocation, and thus conserves the redox energy in a proton gradient. This is NAD(P)H-quinone oxidoreductase subunit 1, chloroplastic from Zygnema circumcarinatum (Green alga).